Reading from the N-terminus, the 345-residue chain is S-adenosylmethionine:tRNA ribosyltransferase-isomerase (345 aa).

It belongs to the QueA family. Monomer.

Its subcellular location is the cytoplasm. It carries out the reaction 7-aminomethyl-7-carbaguanosine(34) in tRNA + S-adenosyl-L-methionine = epoxyqueuosine(34) in tRNA + adenine + L-methionine + 2 H(+). Its pathway is tRNA modification; tRNA-queuosine biosynthesis. Transfers and isomerizes the ribose moiety from AdoMet to the 7-aminomethyl group of 7-deazaguanine (preQ1-tRNA) to give epoxyqueuosine (oQ-tRNA). The protein is S-adenosylmethionine:tRNA ribosyltransferase-isomerase of Acinetobacter baumannii (strain AB0057).